We begin with the raw amino-acid sequence, 237 residues long: Purine nucleoside phosphorylase DeoD-type (237 aa).

An a purine D-ribonucleoside-binding site is contributed by His4. Residues Gly20, Arg24, Arg43, and 87–90 contribute to the phosphate site; that span reads RVGT. Residues 179 to 181 and 203 to 204 contribute to the a purine D-ribonucleoside site; these read EME and SD. Asp204 acts as the Proton donor in catalysis.

Belongs to the PNP/UDP phosphorylase family. In terms of assembly, homohexamer; trimer of homodimers.

The catalysed reaction is a purine D-ribonucleoside + phosphate = a purine nucleobase + alpha-D-ribose 1-phosphate. It catalyses the reaction a purine 2'-deoxy-D-ribonucleoside + phosphate = a purine nucleobase + 2-deoxy-alpha-D-ribose 1-phosphate. Catalyzes the reversible phosphorolytic breakdown of the N-glycosidic bond in the beta-(deoxy)ribonucleoside molecules, with the formation of the corresponding free purine bases and pentose-1-phosphate. This is Purine nucleoside phosphorylase DeoD-type from Clostridium beijerinckii (strain ATCC 51743 / NCIMB 8052) (Clostridium acetobutylicum).